The primary structure comprises 383 residues: Processive diacylglycerol beta-glucosyltransferase (383 aa).

Belongs to the glycosyltransferase 28 family. UgtP subfamily.

The protein resides in the cell membrane. It catalyses the reaction a 1,2-diacyl-3-O-(beta-D-glucopyranosyl)-sn-glycerol + UDP-alpha-D-glucose = a 1,2-diacyl-3-O-(beta-D-Glc-(1-&gt;6)-beta-D-Glc)-sn-glycerol + UDP + H(+). The catalysed reaction is a 1,2-diacyl-3-O-(beta-D-Glc-(1-&gt;6)-beta-D-Glc)-sn-glycerol + UDP-alpha-D-glucose = a 1,2-diacyl-3-O-(beta-D-Glc-(1-&gt;6)-beta-D-Glc-(1-&gt;6)-beta-D-Glc)-sn-glycerol + UDP + H(+). The enzyme catalyses a 1,2-diacyl-sn-glycerol + UDP-alpha-D-glucose = a 1,2-diacyl-3-O-(beta-D-glucopyranosyl)-sn-glycerol + UDP + H(+). Its pathway is glycolipid metabolism; diglucosyl-diacylglycerol biosynthesis. Processive glucosyltransferase involved in the biosynthesis of both the bilayer- and non-bilayer-forming membrane glucolipids. Is able to successively transfer up to three glucosyl residues to diacylglycerol (DAG), thereby catalyzing the formation of beta-monoglucosyl-DAG (3-O-(beta-D-glucopyranosyl)-1,2-diacyl-sn-glycerol), beta-diglucosyl-DAG (3-O-(beta-D-glucopyranosyl-beta-(1-&gt;6)-D-glucopyranosyl)-1,2-diacyl-sn-glycerol) and beta-triglucosyl-DAG (3-O-(beta-D-glucopyranosyl-beta-(1-&gt;6)-D-glucopyranosyl-beta-(1-&gt;6)-D-glucopyranosyl)-1,2-diacyl-sn-glycerol). Beta-diglucosyl-DAG is the predominant glycolipid found in Bacillales and is also used as a membrane anchor for lipoteichoic acid (LTA). This chain is Processive diacylglycerol beta-glucosyltransferase, found in Bacillus licheniformis (strain ATCC 14580 / DSM 13 / JCM 2505 / CCUG 7422 / NBRC 12200 / NCIMB 9375 / NCTC 10341 / NRRL NRS-1264 / Gibson 46).